Consider the following 98-residue polypeptide: Integration host factor subunit alpha (98 aa).

The interval 49–71 is disordered; sequence FGNFDLRDKNQRPGRNPKTGEDI.

This sequence belongs to the bacterial histone-like protein family. Heterodimer of an alpha and a beta chain.

In terms of biological role, this protein is one of the two subunits of integration host factor, a specific DNA-binding protein that functions in genetic recombination as well as in transcriptional and translational control. The polypeptide is Integration host factor subunit alpha (Shewanella halifaxensis (strain HAW-EB4)).